Here is a 1044-residue protein sequence, read N- to C-terminus: MPKREDISKILVIGSGPVVIGQAAEFDYSASQACRSLREEGYEVVLLNSNPATIQTDHEIADRVYIEPITVEAVETIIRKEEIDAIEPHMGGQTALNLVVSLKKMGIIDKYGIKIIGTPVESIEISEDRQKFHDFLISIGERDPERYRISRSNYKEEIEKIPFMPVIVRTSFSLGGSGGNIVKTKEELKAYAEELFRGIDEDYIEVNRSLAGLKELEYEMIRDSIGNCITVCNMENLDPMGVHTGESIVVTPSQTLSDIQYHMLRDAAIKIVSGLGIVGACNIQFALDGNDYYVVEVNPRTSRSSALASKATGYPIARIAAKIAVGYNLTEIRNPITKNTFAAFEPSLDYVTVKIPRWPFDKFSVDRTIGVQMKSIGEVMGIGRTFEEALMKAIASLDIDLSYRLRLYVSDEEIWNLVRTPNDRRIFAIFEALFRDFPVDRIMEESMYDRYFIEKMQNIVDYLKTLEFGHIPENLISLKKLGISDEIIGRTCGIDPDEITRYRITNRILPVFKEIDTCSGEFEVIAPYLYSTYEDEDELPGISGFVAIIGSGPNRIAQGLEFDYGAVKAITALRKMGVGSVMINSNPETVSTDFDVSDALFFEPITVEHVSNILAKANLRGLIVQFSGQTGQNIARRIENVLGSSVVMGTSSESIDRIEDRSLFSKRLEAMGIDQPKFEVATNAEEAINKSLALGLPVILRASHVIGGRAMDIIYDYDFLVERSREVFENVNSVLVSKYLENAVEIDVDFVSNGEDFQICGILVHIEEAGVHSGDATMIFGPKIVPQAAEEKIKSIVGKLVREFNLIGISNLQAAIKDDEVYVIELNARSSRSIPFISKATGYNWVELAVSAIMTGKLEKVSVSSKGYFVKVSVFPFSKFNDMDVSLGPEMKSTGEAMYPGFTMEEAIRKSILRDIKSVFISVRDDDKPRIIEAASIMKQNGLKIYATMGTSRYLRERGIECETVYRIKDERKPRIYDMILAGYIDLVINTPEMNAGSVRDGFKIRRLCVRKGIPLVTNINLANAYSKCLSYTNIDYREISSYH.

The tract at residues 1-398 (MPKREDISKI…ALMKAIASLD (398 aa)) is carboxyphosphate synthetic domain. Arg129, Arg169, Gly175, Gly176, Arg208, Leu210, Glu215, Gly241, Val242, His243, Gln284, and Glu296 together coordinate ATP. One can recognise an ATP-grasp 1 domain in the interval 133 to 325 (HDFLISIGER…IARIAAKIAV (193 aa)). Residues Gln284, Glu296, and Asn298 each contribute to the Mg(2+) site. Residues Gln284, Glu296, and Asn298 each coordinate Mn(2+). Residues 399 to 539 (IDLSYRLRLY…YSTYEDEDEL (141 aa)) form an oligomerization domain region. Residues 540 to 916 (PGISGFVAII…AIRKSILRDI (377 aa)) form a carbamoyl phosphate synthetic domain region. The region spanning 665–854 (SKRLEAMGID…WVELAVSAIM (190 aa)) is the ATP-grasp 2 domain. ATP-binding residues include Arg701, Lys738, Leu740, Glu745, Gly770, Val771, His772, Ser773, Gln813, and Glu825. Residues Gln813, Glu825, and Asn827 each coordinate Mg(2+). Residues Gln813, Glu825, and Asn827 each contribute to the Mn(2+) site. Positions 911 to 1044 (SILRDIKSVF…IDYREISSYH (134 aa)) constitute an MGS-like domain. The segment at 916–1044 (IKSVFISVRD…IDYREISSYH (129 aa)) is allosteric domain.

The protein belongs to the CarB family. As to quaternary structure, composed of two chains; the small (or glutamine) chain promotes the hydrolysis of glutamine to ammonia, which is used by the large (or ammonia) chain to synthesize carbamoyl phosphate. Tetramer of heterodimers (alpha,beta)4. The cofactor is Mg(2+). Mn(2+) serves as cofactor.

It catalyses the reaction hydrogencarbonate + L-glutamine + 2 ATP + H2O = carbamoyl phosphate + L-glutamate + 2 ADP + phosphate + 2 H(+). It carries out the reaction hydrogencarbonate + NH4(+) + 2 ATP = carbamoyl phosphate + 2 ADP + phosphate + 2 H(+). The protein operates within amino-acid biosynthesis; L-arginine biosynthesis; carbamoyl phosphate from bicarbonate: step 1/1. It functions in the pathway pyrimidine metabolism; UMP biosynthesis via de novo pathway; (S)-dihydroorotate from bicarbonate: step 1/3. Its function is as follows. Large subunit of the glutamine-dependent carbamoyl phosphate synthetase (CPSase). CPSase catalyzes the formation of carbamoyl phosphate from the ammonia moiety of glutamine, carbonate, and phosphate donated by ATP, constituting the first step of 2 biosynthetic pathways, one leading to arginine and/or urea and the other to pyrimidine nucleotides. The large subunit (synthetase) binds the substrates ammonia (free or transferred from glutamine from the small subunit), hydrogencarbonate and ATP and carries out an ATP-coupled ligase reaction, activating hydrogencarbonate by forming carboxy phosphate which reacts with ammonia to form carbamoyl phosphate. This chain is Carbamoyl phosphate synthase large chain, found in Thermoplasma volcanium (strain ATCC 51530 / DSM 4299 / JCM 9571 / NBRC 15438 / GSS1).